The chain runs to 468 residues: ATP synthase subunit beta (468 aa).

155-162 (GGAGVGKT) provides a ligand contact to ATP.

It belongs to the ATPase alpha/beta chains family. F-type ATPases have 2 components, CF(1) - the catalytic core - and CF(0) - the membrane proton channel. CF(1) has five subunits: alpha(3), beta(3), gamma(1), delta(1), epsilon(1). CF(0) has three main subunits: a(1), b(2) and c(9-12). The alpha and beta chains form an alternating ring which encloses part of the gamma chain. CF(1) is attached to CF(0) by a central stalk formed by the gamma and epsilon chains, while a peripheral stalk is formed by the delta and b chains.

The protein localises to the cell membrane. It catalyses the reaction ATP + H2O + 4 H(+)(in) = ADP + phosphate + 5 H(+)(out). Produces ATP from ADP in the presence of a proton gradient across the membrane. The catalytic sites are hosted primarily by the beta subunits. In Streptococcus pyogenes serotype M1, this protein is ATP synthase subunit beta.